The sequence spans 1009 residues: Mediator of RNA polymerase II transcription subunit 5 (1009 aa).

This sequence belongs to the Mediator complex subunit 5 family. As to quaternary structure, component of the Mediator complex.

The protein localises to the nucleus. In terms of biological role, component of the Mediator complex, a coactivator involved in the regulated transcription of nearly all RNA polymerase II-dependent genes. Mediator functions as a bridge to convey information from gene-specific regulatory proteins to the basal RNA polymerase II transcription machinery. Mediator is recruited to promoters by direct interactions with regulatory proteins and serves as a scaffold for the assembly of a functional preinitiation complex with RNA polymerase II and the general transcription factors. The sequence is that of Mediator of RNA polymerase II transcription subunit 5 (nut1) from Neosartorya fischeri (strain ATCC 1020 / DSM 3700 / CBS 544.65 / FGSC A1164 / JCM 1740 / NRRL 181 / WB 181) (Aspergillus fischerianus).